The sequence spans 223 residues: Putative 3-methyladenine DNA glycosylase (223 aa).

This sequence belongs to the DNA glycosylase MPG family.

The protein is Putative 3-methyladenine DNA glycosylase of Pseudomonas syringae pv. syringae (strain B728a).